A 182-amino-acid polypeptide reads, in one-letter code: uncharacterized protein (182 aa).

This is an uncharacterized protein from Haemophilus influenzae (strain ATCC 51907 / DSM 11121 / KW20 / Rd).